The sequence spans 425 residues: tRNA (guanine-N(7)-)-methyltransferase non-catalytic subunit wuho (425 aa).

The tract at residues 67–102 (ATCAGKEPGGKEQQLTKQPEEGGTTASGSGVTSTSV) is disordered. The segment covering 88 to 102 (GGTTASGSGVTSTSV) has biased composition (low complexity). WD repeat units lie at residues 97 to 138 (VTST…ARLL), 142 to 181 (PLAR…APPR), 185 to 224 (GHLS…DIHS), 228 to 266 (GHRE…ELLQ), and 325 to 365 (AGSW…PATS).

This sequence belongs to the WD repeat TRM82 family. As to quaternary structure, forms a heterodimer with the catalytic subunit Mettl1. Interacts with mei-P26 and weakly interacts with bgcn; required for the function or formation of the mei-P26-bgcn-bam-sxl complex. Interacts with nanos; may be involved in mei-P26-dependent derepression of the BMP signaling pathway. Interacts with Myc; the interaction may be mediated by mei-P26 and may be involved in the regulation of ribosome biogenesis. In testis, it is present at high level in hub cells, a niche for germline stem cells of testis. Ubiquitously expressed in all testicular cells throughout spermatogenesis. Ubiquitously expressed in all germline and somatic cells of the ovary.

It localises to the nucleus. The protein resides in the cytoplasm. Its pathway is tRNA modification; N(7)-methylguanine-tRNA biosynthesis. In terms of biological role, required for the Mettl1-dependent formation of N(7)-methylguanine at position 46 (m7G46) in tRNA. In the Mettl1-wuho methyltransferase complex, it is required to stabilize and induce conformational changes of the catalytic subunit. Required for binding of nanos mRNA and repression of translation by the mei-P26-bgcn-bam-sxl complex. May cooperate with mei-P26 and nanos to derepress the BMP signaling pathway. May cooperate with mei-P26 to suppress expression of a subset of microRNAs. May cooperate with mei-P26 to regulate bam expression levels in germline cells during gametogenesis. Required to promote mitosis to meiosis transition during gametogenesis. May regulate germline cell division in part by regulating ribosome biogenesis. This is tRNA (guanine-N(7)-)-methyltransferase non-catalytic subunit wuho from Drosophila yakuba (Fruit fly).